The following is a 324-amino-acid chain: Ribose 1,5-bisphosphate isomerase (324 aa).

Residues 22–25 and R65 contribute to the substrate site; that span reads RGAG. C135 serves as the catalytic Proton acceptor. 137-139 contacts substrate; sequence SKA. D204 serves as the catalytic Proton donor. K240 serves as a coordination point for substrate.

The protein belongs to the eIF-2B alpha/beta/delta subunits family. R15P isomerase subfamily.

The catalysed reaction is alpha-D-ribose 1,5-bisphosphate = D-ribulose 1,5-bisphosphate. Its function is as follows. Catalyzes the isomerization of ribose 1,5-bisphosphate (R15P) to ribulose 1,5-bisphosphate (RuBP), the CO(2) acceptor and substrate for RubisCO. Functions in an archaeal AMP degradation pathway, together with AMP phosphorylase and RubisCO. This Pyrococcus furiosus (strain ATCC 43587 / DSM 3638 / JCM 8422 / Vc1) protein is Ribose 1,5-bisphosphate isomerase.